Reading from the N-terminus, the 186-residue chain is ATP synthase subunit delta (186 aa).

The protein belongs to the ATPase delta chain family. As to quaternary structure, F-type ATPases have 2 components, F(1) - the catalytic core - and F(0) - the membrane proton channel. F(1) has five subunits: alpha(3), beta(3), gamma(1), delta(1), epsilon(1). F(0) has three main subunits: a(1), b(2) and c(10-14). The alpha and beta chains form an alternating ring which encloses part of the gamma chain. F(1) is attached to F(0) by a central stalk formed by the gamma and epsilon chains, while a peripheral stalk is formed by the delta and b chains.

The protein localises to the cell inner membrane. In terms of biological role, f(1)F(0) ATP synthase produces ATP from ADP in the presence of a proton or sodium gradient. F-type ATPases consist of two structural domains, F(1) containing the extramembraneous catalytic core and F(0) containing the membrane proton channel, linked together by a central stalk and a peripheral stalk. During catalysis, ATP synthesis in the catalytic domain of F(1) is coupled via a rotary mechanism of the central stalk subunits to proton translocation. Its function is as follows. This protein is part of the stalk that links CF(0) to CF(1). It either transmits conformational changes from CF(0) to CF(1) or is implicated in proton conduction. The protein is ATP synthase subunit delta of Brucella anthropi (strain ATCC 49188 / DSM 6882 / CCUG 24695 / JCM 21032 / LMG 3331 / NBRC 15819 / NCTC 12168 / Alc 37) (Ochrobactrum anthropi).